The sequence spans 85 residues: UPF0181 protein YE1782 (85 aa).

2 disordered regions span residues 1 to 22 (MLAGMPSLSHEEQQEAVERIHQ) and 57 to 85 (DTDFDEHDESDYRRDNEQDADEIEDPYEG). Over residues 9–21 (SHEEQQEAVERIH) the composition is skewed to basic and acidic residues. Residues 74-85 (QDADEIEDPYEG) are compositionally biased toward acidic residues.

The protein belongs to the UPF0181 family.

This Yersinia enterocolitica serotype O:8 / biotype 1B (strain NCTC 13174 / 8081) protein is UPF0181 protein YE1782.